We begin with the raw amino-acid sequence, 402 residues long: UPF0261 protein y4oU (402 aa).

Belongs to the UPF0261 family.

The protein is UPF0261 protein y4oU of Sinorhizobium fredii (strain NBRC 101917 / NGR234).